A 379-amino-acid polypeptide reads, in one-letter code: Cytochrome b (379 aa).

The next 4 helical transmembrane spans lie at 34–54 (FGSL…FLAM), 78–99 (WLIR…YLHI), 114–134 (WNTG…GYVL), and 179–199 (FFTF…VHLL). Heme b is bound by residues His-84 and His-98. Heme b is bound by residues His-183 and His-197. Residue His-202 coordinates a ubiquinone. Transmembrane regions (helical) follow at residues 227–247 (YKDL…TLFY), 289–309 (LGGV…PTLH), 321–341 (LTQT…WIGG), and 348–368 (FITI…ILMP).

Belongs to the cytochrome b family. As to quaternary structure, the cytochrome bc1 complex contains 3 respiratory subunits (MT-CYB, CYC1 and UQCRFS1), 2 core proteins (UQCRC1 and UQCRC2) and probably 6 low-molecular weight proteins. Heme b is required as a cofactor.

It is found in the mitochondrion inner membrane. Component of the ubiquinol-cytochrome c reductase complex (complex III or cytochrome b-c1 complex) that is part of the mitochondrial respiratory chain. The b-c1 complex mediates electron transfer from ubiquinol to cytochrome c. Contributes to the generation of a proton gradient across the mitochondrial membrane that is then used for ATP synthesis. In Glyptemys muhlenbergii (Bog turtle), this protein is Cytochrome b (MT-CYB).